The following is a 363-amino-acid chain: Phosphoserine aminotransferase (363 aa).

Arg-42 contacts L-glutamate. Pyridoxal 5'-phosphate is bound by residues 76 to 77 (AS), Trp-101, Thr-151, Asp-170, and Gln-193. Lys-194 carries the N6-(pyridoxal phosphate)lysine modification. 234–235 (NT) provides a ligand contact to pyridoxal 5'-phosphate.

Belongs to the class-V pyridoxal-phosphate-dependent aminotransferase family. SerC subfamily. In terms of assembly, homodimer. It depends on pyridoxal 5'-phosphate as a cofactor.

It localises to the cytoplasm. The enzyme catalyses O-phospho-L-serine + 2-oxoglutarate = 3-phosphooxypyruvate + L-glutamate. The catalysed reaction is 4-(phosphooxy)-L-threonine + 2-oxoglutarate = (R)-3-hydroxy-2-oxo-4-phosphooxybutanoate + L-glutamate. It participates in amino-acid biosynthesis; L-serine biosynthesis; L-serine from 3-phospho-D-glycerate: step 2/3. Functionally, catalyzes the reversible conversion of 3-phosphohydroxypyruvate to phosphoserine and of 3-hydroxy-2-oxo-4-phosphonooxybutanoate to phosphohydroxythreonine. This is Phosphoserine aminotransferase from Listeria innocua serovar 6a (strain ATCC BAA-680 / CLIP 11262).